We begin with the raw amino-acid sequence, 249 residues long: 3-deoxy-D-manno-octulosonic acid kinase (249 aa).

D175 is an active-site residue.

The protein belongs to the protein kinase superfamily. KdkA/RfaP family.

Its subcellular location is the cell inner membrane. The catalysed reaction is an alpha-Kdo-(2-&gt;6)-lipid IVA + ATP = a 4-O-phospho-alpha-Kdo-(2-&gt;6)-lipid IVA + ADP + H(+). Its pathway is bacterial outer membrane biogenesis; LPS core biosynthesis. Its function is as follows. Catalyzes the ATP-dependent phosphorylation of the 3-deoxy-D-manno-octulosonic acid (Kdo) residue in Kdo-lipid IV(A) at the 4-OH position. This chain is 3-deoxy-D-manno-octulosonic acid kinase, found in Stenotrophomonas maltophilia (strain R551-3).